The following is a 500-amino-acid chain: Histidine ammonia-lyase (500 aa).

Positions 141–143 form a cross-link, 5-imidazolinone (Ala-Gly); the sequence is ASG. Ser142 carries the 2,3-didehydroalanine (Ser) modification.

This sequence belongs to the PAL/histidase family. Post-translationally, contains an active site 4-methylidene-imidazol-5-one (MIO), which is formed autocatalytically by cyclization and dehydration of residues Ala-Ser-Gly.

It localises to the cytoplasm. It catalyses the reaction L-histidine = trans-urocanate + NH4(+). Its pathway is amino-acid degradation; L-histidine degradation into L-glutamate; N-formimidoyl-L-glutamate from L-histidine: step 1/3. In Shouchella clausii (strain KSM-K16) (Alkalihalobacillus clausii), this protein is Histidine ammonia-lyase.